A 256-amino-acid chain; its full sequence is Spheroidene monooxygenase (256 aa).

Residues 1-23 (MTNELSNAAGASQQGPAASSFSA) show a composition bias toward low complexity. Residues 1-26 (MTNELSNAAGASQQGPAASSFSADTP) are disordered.

This sequence belongs to the CrtA family. It depends on heme as a cofactor.

The catalysed reaction is spheroidene + 4 reduced [2Fe-2S]-[ferredoxin] + 2 O2 + 4 H(+) = spheroiden-2-one + 4 oxidized [2Fe-2S]-[ferredoxin] + 3 H2O. It carries out the reaction spirilloxanthin + 4 reduced [2Fe-2S]-[ferredoxin] + 2 O2 + 4 H(+) = 2-oxospirilloxanthin + 4 oxidized [2Fe-2S]-[ferredoxin] + 3 H2O. The enzyme catalyses 2-oxospirilloxanthin + 4 reduced [2Fe-2S]-[ferredoxin] + 2 O2 + 4 H(+) = 2,2'-dioxospirilloxanthin + 4 oxidized [2Fe-2S]-[ferredoxin] + 3 H2O. It catalyses the reaction spheroidene + 2 reduced [2Fe-2S]-[ferredoxin] + O2 + 2 H(+) = 2-hydroxyspheroidene + 2 oxidized [2Fe-2S]-[ferredoxin] + H2O. The catalysed reaction is 2-hydroxyspheroidene + 2 reduced [2Fe-2S]-[ferredoxin] + O2 + 2 H(+) = 2,2-dihydroxyspheroidene + 2 oxidized [2Fe-2S]-[ferredoxin] + H2O. It carries out the reaction 2,2-dihydroxyspheroidene = spheroiden-2-one + H2O. The enzyme catalyses spirilloxanthin + 2 reduced [2Fe-2S]-[ferredoxin] + O2 + 2 H(+) = 2-hydroxyspirilloxanthin + 2 oxidized [2Fe-2S]-[ferredoxin] + H2O. It catalyses the reaction 2-hydroxyspirilloxanthin + 2 reduced [2Fe-2S]-[ferredoxin] + O2 + 2 H(+) = 2,2-dihydroxyspirilloxanthin + 2 oxidized [2Fe-2S]-[ferredoxin] + H2O. The catalysed reaction is 2,2-dihydroxyspirilloxanthin = 2-oxospirilloxanthin + H2O. It carries out the reaction 2-oxospirilloxanthin + 2 reduced [2Fe-2S]-[ferredoxin] + O2 + 2 H(+) = 2'-hydroxy-2-oxospirilloxanthin + 2 oxidized [2Fe-2S]-[ferredoxin] + H2O. The enzyme catalyses 2'-hydroxy-2-oxospirilloxanthin + 2 reduced [2Fe-2S]-[ferredoxin] + O2 + 2 H(+) = 2',2'-dihydroxy-2-oxospirilloxanthin + 2 oxidized [2Fe-2S]-[ferredoxin] + H2O. It catalyses the reaction 2',2'-dihydroxy-2-oxospirilloxanthin = 2,2'-dioxospirilloxanthin + H2O. Its pathway is carotenoid biosynthesis; spheroidene biosynthesis. It participates in carotenoid biosynthesis; spirilloxanthin biosynthesis. Its function is as follows. Involved in the biosynthesis of the carotenoids spheroidene and spirilloxanthin. Catalyzes the introduction of one keto group at the C-2 position of spheroidene and two keto groups at the C-2 and C-2' positions of spirilloxanthin. This Rubrivivax gelatinosus (Rhodocyclus gelatinosus) protein is Spheroidene monooxygenase.